A 341-amino-acid chain; its full sequence is MRISPEEEVKIIKEILTAMNVPEESSDIVADVTLDADLKGFSSHGIGRFPQYVDGLRHGTIRADGDITIERETESTALINGNHIFGHVVAYRAMELAIEKARNTGVGLVGVHDSNHFGVAGYYSDMAVMNDMIGVVIANTEPAVAPIGGRKPILGTNPVAIGIPSNRYYVSVDMATSASARGKLLEAARKGESIPENVALDAEGKPTTDPEMALKGSILPFGGHKGYALSFMIEILAGPLVGAAFGTAVTGTANPEEMCTKGDLMMAIDPSKMVDPDEFRAQVDEFIEEVKSSGDVLIPGDIESMNIKRRRAEGIELDEKLLERILGIARELDINLEIKEL.

It belongs to the LDH2/MDH2 oxidoreductase family.

The protein resides in the cytoplasm. The enzyme catalyses a (2S)-2-hydroxycarboxylate + NAD(+) = a 2-oxocarboxylate + NADH + H(+). The protein operates within cofactor biosynthesis; coenzyme M biosynthesis; sulfoacetaldehyde from phosphoenolpyruvate and sulfite: step 3/4. It participates in cofactor biosynthesis; 5,6,7,8-tetrahydromethanopterin biosynthesis. Its function is as follows. Catalyzes the reduction of sulfopyruvate to (R)-sulfolactate. Involved in the biosynthesis of both coenzyme M (with (R)-sulfolactate) and methanopterin (with alpha-ketoglutarate). This chain is L-sulfolactate dehydrogenase (comC), found in Methanothermobacter thermautotrophicus (strain ATCC 29096 / DSM 1053 / JCM 10044 / NBRC 100330 / Delta H) (Methanobacterium thermoautotrophicum).